The following is a 180-amino-acid chain: Immediate early response gene 2 protein (180 aa).

The interval 53 to 135 (MSEKSGQSVT…KRRSKTATDS (83 aa)) is disordered. A compositionally biased stretch (polar residues) spans 56–92 (KSGQSVTEECTSHTQEPMDTSSSTATPLRETSGQSSE). Residues 93 to 103 (DGQRSGLEGHP) are compositionally biased toward basic and acidic residues.

Belongs to the IER family. As to quaternary structure, interacts with FIBPB.

The protein localises to the nucleus. It is found in the cytoplasm. In terms of biological role, DNA-binding protein that seems to act as a transcription factor. Mediates with FIBPB FGF-signaling in Kupffer's vesicle ciliogenesis and in the establishment of laterality in the embryo. This chain is Immediate early response gene 2 protein, found in Danio rerio (Zebrafish).